The primary structure comprises 281 residues: MQHDHSAEPLSPGLYIVATPIGNLGDITLRAIETLRRCDAVACEDTRMTGKLLKHLGISKSLWRYDDHSDAKAREKIVAAISEKAVALVSDAGTPLISDPGYRLVRDARDASLPVTTIPGACAAIAGLTLSGLPSDRFLFAGFLPVKDKARREMLEKLAPVDASLIFYETGPRLLKSLAAIDEMLPNREISVARELTKLHEECRRGMGAGLMAHYQANPPKGEIVLMVGPPPEAAPDDTDAELMLREALETMKPSQAAGHVAKATGLDRKDLYSRALELKT.

Belongs to the methyltransferase superfamily. RsmI family.

It is found in the cytoplasm. It catalyses the reaction cytidine(1402) in 16S rRNA + S-adenosyl-L-methionine = 2'-O-methylcytidine(1402) in 16S rRNA + S-adenosyl-L-homocysteine + H(+). Its function is as follows. Catalyzes the 2'-O-methylation of the ribose of cytidine 1402 (C1402) in 16S rRNA. This is Ribosomal RNA small subunit methyltransferase I from Erythrobacter litoralis (strain HTCC2594).